The following is a 412-amino-acid chain: Sterol-4-alpha-carboxylate 3-dehydrogenase erg26, decarboxylating (412 aa).

NADP(+) contacts are provided by residues 17–23, 89–90, and 111–113; these read GGCGFLG, DI, and TAT. Substrate-binding residues include serine 158 and tyrosine 188. Residues tyrosine 188, lysine 192, and 217–220 each bind NADP(+); that span reads PAGI. The active-site Proton donor is lysine 192.

It belongs to the 3-beta-HSD family. As to quaternary structure, heterotetramer of erg25, erg26, erg27 and erg28. Erg28 acts as a scaffold to tether erg27 and other 4,4-demethylation-related enzymes, forming a demethylation enzyme complex, in the endoplasmic reticulum.

Its subcellular location is the endoplasmic reticulum membrane. It participates in steroid metabolism; ergosterol biosynthesis. In terms of biological role, sterol-C4-methyl oxidase; part of the third module of ergosterol biosynthesis pathway that includes the late steps of the pathway. Erg26 is a catalytic component of the C-4 demethylation complex that catalyzes the conversion of 4,4-dimethylfecosterol into fecosterol via 4-methylfecosterol. The third module or late pathway involves the ergosterol synthesis itself through consecutive reactions that mainly occur in the endoplasmic reticulum (ER) membrane. Firstly, the squalene synthase erg9 catalyzes the condensation of 2 farnesyl pyrophosphate moieties to form squalene, which is the precursor of all steroids. Squalene synthase is crucial for balancing the incorporation of farnesyl diphosphate (FPP) into sterol and nonsterol isoprene synthesis. Secondly, squalene is converted into lanosterol by the consecutive action of the squalene epoxidase erg1 and the lanosterol synthase erg7. Then, the delta(24)-sterol C-methyltransferase erg6 methylates lanosterol at C-24 to produce eburicol. Eburicol is the substrate of the sterol 14-alpha demethylase encoded by cyp51A and cyp51B, to yield 4,4,24-trimethyl ergosta-8,14,24(28)-trienol. The C-14 reductase erg24 then reduces the C14=C15 double bond which leads to 4,4-dimethylfecosterol. A sequence of further demethylations at C-4, involving the C-4 demethylation complex containing the C-4 methylsterol oxidases erg25A or erg25B, the sterol-4-alpha-carboxylate 3-dehydrogenase erg26 and the 3-keto-steroid reductase erg27, leads to the production of fecosterol via 4-methylfecosterol. The C-8 sterol isomerase erg2 then catalyzes the reaction which results in unsaturation at C-7 in the B ring of sterols and thus converts fecosterol to episterol. The sterol-C5-desaturase erg3B then catalyzes the introduction of a C-5 double bond in the B ring to produce 5-dehydroepisterol. The 2 other sterol-C5-desaturases, erg3A and erg3C, seem to be less important in ergosterol biosynthesis. The C-22 sterol desaturase erg5 further converts 5-dehydroepisterol into ergosta-5,7,22,24(28)-tetraen-3beta-ol by forming the C-22(23) double bond in the sterol side chain. Finally, ergosta-5,7,22,24(28)-tetraen-3beta-ol is substrate of the C-24(28) sterol reductases erg4A and erg4B to produce ergosterol. Possible alternative sterol biosynthetic pathways might exist from fecosterol to ergosterol, depending on the activities of the erg3 isoforms. In Aspergillus fumigatus (strain ATCC MYA-4609 / CBS 101355 / FGSC A1100 / Af293) (Neosartorya fumigata), this protein is Sterol-4-alpha-carboxylate 3-dehydrogenase erg26, decarboxylating.